The following is a 393-amino-acid chain: NADH-quinone oxidoreductase subunit D (393 aa).

This sequence belongs to the complex I 49 kDa subunit family. NDH-1 is composed of 14 different subunits. Subunits NuoB, C, D, E, F, and G constitute the peripheral sector of the complex.

It localises to the cell inner membrane. It carries out the reaction a quinone + NADH + 5 H(+)(in) = a quinol + NAD(+) + 4 H(+)(out). In terms of biological role, NDH-1 shuttles electrons from NADH, via FMN and iron-sulfur (Fe-S) centers, to quinones in the respiratory chain. The immediate electron acceptor for the enzyme in this species is believed to be ubiquinone. Couples the redox reaction to proton translocation (for every two electrons transferred, four hydrogen ions are translocated across the cytoplasmic membrane), and thus conserves the redox energy in a proton gradient. This chain is NADH-quinone oxidoreductase subunit D, found in Ehrlichia chaffeensis (strain ATCC CRL-10679 / Arkansas).